The following is a 163-amino-acid chain: Ribosome maturation factor RimM (163 aa).

A PRC barrel domain is found at 92–162 (EDEFYVADLV…AGRAVVRPPE (71 aa)).

It belongs to the RimM family. Binds ribosomal protein uS19.

The protein resides in the cytoplasm. Its function is as follows. An accessory protein needed during the final step in the assembly of 30S ribosomal subunit, possibly for assembly of the head region. Essential for efficient processing of 16S rRNA. May be needed both before and after RbfA during the maturation of 16S rRNA. It has affinity for free ribosomal 30S subunits but not for 70S ribosomes. This Rubrobacter xylanophilus (strain DSM 9941 / JCM 11954 / NBRC 16129 / PRD-1) protein is Ribosome maturation factor RimM.